The following is a 199-amino-acid chain: Protein-methionine-sulfoxide reductase heme-binding subunit MsrQ (199 aa).

Transmembrane regions (helical) follow at residues 13-33 (VLLH…VDQG), 79-99 (LLGL…ALLE), 120-140 (LGII…QIMM), 147-167 (WQKL…HYLW), and 169-189 (VKTL…LLLL).

It belongs to the MsrQ family. As to quaternary structure, heterodimer of a catalytic subunit (MsrP) and a heme-binding subunit (MsrQ). FMN serves as cofactor. Requires heme b as cofactor.

The protein localises to the cell inner membrane. Part of the MsrPQ system that repairs oxidized periplasmic proteins containing methionine sulfoxide residues (Met-O), using respiratory chain electrons. Thus protects these proteins from oxidative-stress damage caused by reactive species of oxygen and chlorine generated by the host defense mechanisms. MsrPQ is essential for the maintenance of envelope integrity under bleach stress, rescuing a wide series of structurally unrelated periplasmic proteins from methionine oxidation. MsrQ provides electrons for reduction to the reductase catalytic subunit MsrP, using the quinone pool of the respiratory chain. The sequence is that of Protein-methionine-sulfoxide reductase heme-binding subunit MsrQ from Pectobacterium atrosepticum (strain SCRI 1043 / ATCC BAA-672) (Erwinia carotovora subsp. atroseptica).